We begin with the raw amino-acid sequence, 120 residues long: uncharacterized protein (120 aa).

The N-terminal stretch at 1 to 19 (MTSFAVVARLITRAPRVRA) is a signal peptide. Disordered stretches follow at residues 48-71 (VAKKADEGAQTISDAAGNLKDKAK) and 90-120 (DTVTGKTEETKESIKATAKTVERSMNTKNLK). Basic and acidic residues predominate over residues 90–103 (DTVTGKTEETKESI).

This is an uncharacterized protein from Arabidopsis thaliana (Mouse-ear cress).